Here is a 460-residue protein sequence, read N- to C-terminus: C4-dicarboxylate transport protein (460 aa).

The next 8 helical transmembrane spans lie at 21-38 (LYFQ…IGHF), 53-75 (FIKL…GIAG), 88-110 (YALL…VVNV), 153-175 (IVGA…FGFA), 196-218 (VMFN…AMAF), 231-253 (LGQL…LGSI), 301-323 (VVGL…YLTM), and 363-385 (FIVL…ALIL). The interval 438-460 (PEDDLGVAEGPTPANAVNTTKTV) is disordered.

Belongs to the dicarboxylate/amino acid:cation symporter (DAACS) (TC 2.A.23) family.

Its subcellular location is the cell inner membrane. Responsible for the transport of dicarboxylates such as succinate, fumarate, and malate from the periplasm across the membrane. In Pseudomonas syringae pv. tomato (strain ATCC BAA-871 / DC3000), this protein is C4-dicarboxylate transport protein.